The sequence spans 316 residues: Glycine--tRNA ligase alpha subunit (316 aa).

This sequence belongs to the class-II aminoacyl-tRNA synthetase family. Tetramer of two alpha and two beta subunits.

Its subcellular location is the cytoplasm. The catalysed reaction is tRNA(Gly) + glycine + ATP = glycyl-tRNA(Gly) + AMP + diphosphate. The protein is Glycine--tRNA ligase alpha subunit of Paracoccus denitrificans (strain Pd 1222).